The sequence spans 320 residues: uncharacterized protein (320 aa).

An N-terminal signal peptide occupies residues 1–23 (MKLNLRFPSYFLPVVAASAFLVS). Cys-24 carries N-palmitoyl cysteine lipidation. Residue Cys-24 is the site of S-diacylglycerol cysteine attachment. The tract at residues 160 to 181 (KNHEHGHTHKNGETHEHDHDHH) is disordered.

The protein localises to the cell membrane. This is an uncharacterized protein from Mycoplasma pneumoniae (strain ATCC 29342 / M129 / Subtype 1) (Mycoplasmoides pneumoniae).